Reading from the N-terminus, the 105-residue chain is 5-hydroxymethyl-dUMP N-hydrolase (105 aa).

5-hydroxymethyl-dUMP is bound by residues Gly6, Ile8, Ser42, Gly44, Glu48, and Ser72.

This sequence belongs to the 2'-deoxynucleoside 5'-phosphate N-hydrolase 1 family. Monomer and homodimer.

Its subcellular location is the cytoplasm. It is found in the nucleus. It catalyses the reaction 5-hydroxymethyl-dUMP + H2O = 5-hydroxymethyluracil + 2-deoxy-D-ribose 5-phosphate. Functionally, part of a nucleotide salvage pathway that eliminates epigenetically modified 5-hydroxymethyl-dCMP (hmdCMP) in a two-step process entailing deamination to cytotoxic 5-hydroxymethyl-dUMP (hmdUMP), followed by its hydrolysis into 5-hydroxymethyluracil (hmU) and 2-deoxy-D-ribose 5-phosphate (deoxyribosephosphate). Catalyzes the second step in that pathway, the hydrolysis of the N-glycosidic bond in hmdUMP, degrading this cytotoxic nucleotide to avoid its genomic integration. This chain is 5-hydroxymethyl-dUMP N-hydrolase, found in Branchiostoma floridae (Florida lancelet).